The following is a 149-amino-acid chain: 3-dehydroquinate dehydratase (149 aa).

The active-site Proton acceptor is Y23. Substrate is bound by residues N75, H81, and D88. H101 (proton donor) is an active-site residue. Substrate-binding positions include 102 to 103 and R112; that span reads LS.

It belongs to the type-II 3-dehydroquinase family. Homododecamer.

The enzyme catalyses 3-dehydroquinate = 3-dehydroshikimate + H2O. The protein operates within metabolic intermediate biosynthesis; chorismate biosynthesis; chorismate from D-erythrose 4-phosphate and phosphoenolpyruvate: step 3/7. Its function is as follows. Catalyzes a trans-dehydration via an enolate intermediate. In Stenotrophomonas maltophilia (strain R551-3), this protein is 3-dehydroquinate dehydratase.